The sequence spans 330 residues: Transcription factor TGA2 (330 aa).

The tract at residues 1–48 is disordered; sequence MADTSPRTDVSTDDDTDHPDLGSEGALVNTAASDSSDRSKGKMDQKTL. A compositionally biased stretch (basic and acidic residues) spans 35–47; sequence SSDRSKGKMDQKT. A bZIP domain is found at 44-107; that stretch reads DQKTLRRLAQ…GTGDQAHSTG (64 aa). Coiled-coil stretches lie at residues 45–142 and 217–244; these read QKTL…HAGD and INNLQQTSQQAEDALSQGMESLQQSLAD. The interval 46–66 is basic motif; sequence KTLRRLAQNREAARKSRLRKK. The tract at residues 72–86 is leucine-zipper; the sequence is LENSRLKLTQLEQEL. Positions 111 to 327 constitute a DOG1 domain; that stretch reads ALAFDAEHSR…RALSSLWLAR (217 aa).

It belongs to the bZIP family. In terms of assembly, binds DNA as a dimer. Interacts with NPR1, NPR3 and NPR4. Interacts with GRXC7/ROXY1 and GRXC9/GRX480. As to expression, expressed in the whole plant.

It is found in the nucleus. Transcriptional activator that binds specifically to the DNA sequence 5'-TGACG-3'. Recognizes ocs elements like the as-1 motif of the cauliflower mosaic virus 35S promoter. Binding to the as-1-like cis elements mediate auxin- and salicylic acid-inducible transcription. Required to induce the systemic acquired resistance (SAR) via the regulation of pathogenesis-related genes expression. Binding to the as-1 element of PR-1 promoter is salicylic acid-inducible and mediated by NPR1. Could also bind to the C-boxes (5'-ATGACGTCAT-3') with high affinity. The sequence is that of Transcription factor TGA2 (TGA2) from Arabidopsis thaliana (Mouse-ear cress).